The following is a 388-amino-acid chain: Succinate--CoA ligase [ADP-forming] subunit beta (388 aa).

One can recognise an ATP-grasp domain in the interval 9-244 (KEILRKYNVP…LDEEDANEIE (236 aa)). ATP-binding positions include Lys46, 53 to 55 (GRG), Glu99, Ala102, and Glu107. Residues Asn199 and Asp213 each contribute to the Mg(2+) site. Substrate contacts are provided by residues Asn264 and 321–323 (GIM).

The protein belongs to the succinate/malate CoA ligase beta subunit family. Heterotetramer of two alpha and two beta subunits. Mg(2+) serves as cofactor.

The catalysed reaction is succinate + ATP + CoA = succinyl-CoA + ADP + phosphate. The enzyme catalyses GTP + succinate + CoA = succinyl-CoA + GDP + phosphate. It functions in the pathway carbohydrate metabolism; tricarboxylic acid cycle; succinate from succinyl-CoA (ligase route): step 1/1. In terms of biological role, succinyl-CoA synthetase functions in the citric acid cycle (TCA), coupling the hydrolysis of succinyl-CoA to the synthesis of either ATP or GTP and thus represents the only step of substrate-level phosphorylation in the TCA. The beta subunit provides nucleotide specificity of the enzyme and binds the substrate succinate, while the binding sites for coenzyme A and phosphate are found in the alpha subunit. In Cupriavidus necator (strain ATCC 17699 / DSM 428 / KCTC 22496 / NCIMB 10442 / H16 / Stanier 337) (Ralstonia eutropha), this protein is Succinate--CoA ligase [ADP-forming] subunit beta.